A 79-amino-acid polypeptide reads, in one-letter code: UPF0154 protein Lm4b_01315 (79 aa).

Residues 2–22 form a helical membrane-spanning segment; it reads WIYILVGIICLLAGLAGGFFI. Residues 57 to 66 show a composition bias toward polar residues; sequence KINQMMSAMN. The tract at residues 57 to 79 is disordered; the sequence is KINQMMSAMNKQQEKEKPKKTKK.

The protein belongs to the UPF0154 family.

Its subcellular location is the cell membrane. This is UPF0154 protein Lm4b_01315 from Listeria monocytogenes serotype 4b (strain CLIP80459).